Consider the following 387-residue polypeptide: S-adenosylmethionine synthase (387 aa).

Residue H15 coordinates ATP. A Mg(2+)-binding site is contributed by D17. E43 contacts K(+). Residues E56 and Q99 each coordinate L-methionine. Residues Q99–R109 form a flexible loop region. ATP contacts are provided by residues D166 to K168, R232 to F233, D241, R247 to K248, A264, and K268. Position 241 (D241) interacts with L-methionine. K272 contacts L-methionine.

Belongs to the AdoMet synthase family. Homotetramer; dimer of dimers. The cofactor is Mg(2+). K(+) serves as cofactor.

The protein localises to the cytoplasm. It carries out the reaction L-methionine + ATP + H2O = S-adenosyl-L-methionine + phosphate + diphosphate. The protein operates within amino-acid biosynthesis; S-adenosyl-L-methionine biosynthesis; S-adenosyl-L-methionine from L-methionine: step 1/1. In terms of biological role, catalyzes the formation of S-adenosylmethionine (AdoMet) from methionine and ATP. The overall synthetic reaction is composed of two sequential steps, AdoMet formation and the subsequent tripolyphosphate hydrolysis which occurs prior to release of AdoMet from the enzyme. The protein is S-adenosylmethionine synthase of Nitrosomonas eutropha (strain DSM 101675 / C91 / Nm57).